A 257-amino-acid chain; its full sequence is Major prion protein (257 aa).

Residues 1–24 form the signal peptide; sequence MVKSHIGSWLLVLFVATWSDIGFC. The segment at 25–234 is interaction with GRB2, ERI3 and SYN1; that stretch reads KKRPKPGGGW…ESEAYYQRGA (210 aa). The disordered stretch occupies residues 27–114; sequence RPKPGGGWNT…KPSKPKTNMK (88 aa). Tandem repeats lie at residues 54–62, 63–70, 71–78, 79–86, and 87–95. The tract at residues 54–95 is 5 X 8 AA tandem repeats of P-H-G-G-G-W-G-Q; the sequence is PQGGGGWGQPHGGGWGQPHGGGWGQPHGGGWGQPHGGGGWGQ. Residues 55–101 are compositionally biased toward gly residues; the sequence is QGGGGWGQPHGGGWGQPHGGGWGQPHGGGWGQPHGGGGWGQGGGSHG. Residues His64, Gly65, Gly66, His72, Gly73, Gly74, His80, Gly81, Gly82, His88, Gly90, and Gly91 each coordinate Cu(2+). An intrachain disulfide couples Cys183 to Cys218. 2 N-linked (GlcNAc...) asparagine glycosylation sites follow: Asn185 and Asn201. Ala234 is lipidated: GPI-anchor amidated alanine. A propeptide spans 235–257 (removed in mature form); the sequence is SAILFSPPPVILLISLLILLIVG.

It belongs to the prion family. Monomer and homodimer. Has a tendency to aggregate into amyloid fibrils containing a cross-beta spine, formed by a steric zipper of superposed beta-strands. Soluble oligomers may represent an intermediate stage on the path to fibril formation. Copper binding may promote oligomerization. Interacts with GRB2, APP, ERI3/PRNPIP and SYN1. Mislocalized cytosolically exposed PrP interacts with MGRN1; this interaction alters MGRN1 subcellular location and causes lysosomal enlargement. Interacts with KIAA1191.

Its subcellular location is the cell membrane. It localises to the golgi apparatus. Its primary physiological function is unclear. Has cytoprotective activity against internal or environmental stresses. May play a role in neuronal development and synaptic plasticity. May be required for neuronal myelin sheath maintenance. May play a role in iron uptake and iron homeostasis. Soluble oligomers are toxic to cultured neuroblastoma cells and induce apoptosis (in vitro). Association with GPC1 (via its heparan sulfate chains) targets PRNP to lipid rafts. Also provides Cu(2+) or Zn(2+) for the ascorbate-mediated GPC1 deaminase degradation of its heparan sulfate side chains. This chain is Major prion protein (PRNP), found in Mustela putorius furo (European domestic ferret).